The following is a 357-amino-acid chain: Dynein axonemal assembly factor 10 (357 aa).

6 WD repeats span residues 63–105 (EKAK…MPVY), 115–154 (NAID…DPVA), 162–205 (ENKR…LRWE), 207–249 (NIKN…PTKG), 257–297 (AHKS…QRSK), and 319–357 (LSTQ…LNKI).

Component of the PAQosome complex which is responsible for the biogenesis of several protein complexes and which consists of R2TP complex members RUVBL1, RUVBL2, RPAP3 and PIH1D1, URI complex members PFDN2, PFDN6, PDRG1, UXT and URI1 as well as ASDURF, POLR2E and DNAAF10/WDR92. Interacts with PIH1D1; the interaction associates DNAAF10 with the R2TP complex. Interacts with several dynein axonemal assembly factors. Widely expressed with the highest expression in testis.

It localises to the dynein axonemal particle. Its function is as follows. Key assembly factor specifically required for the stability of axonemal dynein heavy chains in cytoplasm. This chain is Dynein axonemal assembly factor 10, found in Homo sapiens (Human).